A 404-amino-acid chain; its full sequence is Glucose-1-phosphate adenylyltransferase 2 (404 aa).

Alpha-D-glucose 1-phosphate contacts are provided by residues Y97, G162, 177 to 178, and S195; that span reads EK.

This sequence belongs to the bacterial/plant glucose-1-phosphate adenylyltransferase family. In terms of assembly, homotetramer.

The catalysed reaction is alpha-D-glucose 1-phosphate + ATP + H(+) = ADP-alpha-D-glucose + diphosphate. It functions in the pathway glycan biosynthesis; glycogen biosynthesis. Involved in the biosynthesis of ADP-glucose, a building block required for the elongation reactions to produce glycogen. Catalyzes the reaction between ATP and alpha-D-glucose 1-phosphate (G1P) to produce pyrophosphate and ADP-Glc. The protein is Glucose-1-phosphate adenylyltransferase 2 of Vibrio vulnificus (strain CMCP6).